The sequence spans 102 residues: Signal recognition particle 19 kDa protein (102 aa).

The protein belongs to the SRP19 family. In terms of assembly, part of the signal recognition particle protein translocation system, which is composed of SRP and FtsY. Archaeal SRP consists of a 7S RNA molecule of 300 nucleotides and two protein subunits: SRP54 and SRP19.

It localises to the cytoplasm. Functionally, involved in targeting and insertion of nascent membrane proteins into the cytoplasmic membrane. Binds directly to 7S RNA and mediates binding of the 54 kDa subunit of the SRP. This Saccharolobus solfataricus (strain ATCC 35092 / DSM 1617 / JCM 11322 / P2) (Sulfolobus solfataricus) protein is Signal recognition particle 19 kDa protein.